We begin with the raw amino-acid sequence, 664 residues long: Fructose-1,6-bisphosphatase class 3 (664 aa).

It belongs to the FBPase class 3 family. Mn(2+) serves as cofactor.

The enzyme catalyses beta-D-fructose 1,6-bisphosphate + H2O = beta-D-fructose 6-phosphate + phosphate. It functions in the pathway carbohydrate biosynthesis; gluconeogenesis. The chain is Fructose-1,6-bisphosphatase class 3 from Bacteroides fragilis (strain YCH46).